Reading from the N-terminus, the 247-residue chain is MGTSSTDSQQAGHRRCSTSNTSAENLTCLSLPGSPGKTAPLPGPAQAGAGQPLPKGCAAVKAEVGIPAPHTSQEVRIHIRRLLSWAAPGACGLRSTPCALPQALPQARPCPGRWFFPGCSLPTGGAQTILSLWTWRHFLNWALQQREENSGRARRVPPVPRTAPVSKGEGSHPPQNSNGEKVKTITPDVGLHQSLTSDPTVAVLRAKRAPEAHPPRSCSGSLTARVCHMGVCQGQGDTEDGRMTLMG.

Polar residues predominate over residues 1–28; that stretch reads MGTSSTDSQQAGHRRCSTSNTSAENLTC. 2 disordered regions span residues 1 to 52 and 147 to 183; these read MGTS…AGQP and EENS…EKVK.

Phosphorylated. Post-translationally, N-glycosylated. Expressed by cementoblasts, a subpopulation of periodontal ligament cells and cells located around vessels in periodontium (at protein level).

It is found in the cytoplasm. The protein resides in the nucleus. In terms of biological role, may play a role in development of the periodontium which surrounds and supports the teeth by promoting the differentiation of multi-potent cells from the periodontal ligament into cementoblasts to form the cementum. Binds hydroxyapatite and may promote the biomineralization of the cementum. Also promotes cell proliferation. In Homo sapiens (Human), this protein is Cementoblastoma-derived protein 1.